The primary structure comprises 213 residues: Orotate phosphoribosyltransferase (213 aa).

Lysine 26 serves as a coordination point for 5-phospho-alpha-D-ribose 1-diphosphate. An orotate-binding site is contributed by 34-35 (FF). 5-phospho-alpha-D-ribose 1-diphosphate is bound by residues 72-73 (YK), arginine 99, lysine 100, lysine 103, histidine 105, and 124-132 (DDVITAGTA). Orotate is bound by residues threonine 128 and arginine 156.

The protein belongs to the purine/pyrimidine phosphoribosyltransferase family. PyrE subfamily. Homodimer. The cofactor is Mg(2+).

The enzyme catalyses orotidine 5'-phosphate + diphosphate = orotate + 5-phospho-alpha-D-ribose 1-diphosphate. The protein operates within pyrimidine metabolism; UMP biosynthesis via de novo pathway; UMP from orotate: step 1/2. Functionally, catalyzes the transfer of a ribosyl phosphate group from 5-phosphoribose 1-diphosphate to orotate, leading to the formation of orotidine monophosphate (OMP). The chain is Orotate phosphoribosyltransferase from Escherichia coli O157:H7.